A 332-amino-acid chain; its full sequence is Anthranilate phosphoribosyltransferase (332 aa).

5-phospho-alpha-D-ribose 1-diphosphate-binding positions include Gly79, 82-83 (GD), Thr87, 89-92 (NIST), 107-115 (KHGNYGATS), and Ala119. Position 79 (Gly79) interacts with anthranilate. Ser91 serves as a coordination point for Mg(2+). An anthranilate-binding site is contributed by Asn110. Arg165 is an anthranilate binding site. Mg(2+)-binding residues include Asp223 and Glu224.

Belongs to the anthranilate phosphoribosyltransferase family. Homodimer. Mg(2+) is required as a cofactor.

It catalyses the reaction N-(5-phospho-beta-D-ribosyl)anthranilate + diphosphate = 5-phospho-alpha-D-ribose 1-diphosphate + anthranilate. The protein operates within amino-acid biosynthesis; L-tryptophan biosynthesis; L-tryptophan from chorismate: step 2/5. Its function is as follows. Catalyzes the transfer of the phosphoribosyl group of 5-phosphorylribose-1-pyrophosphate (PRPP) to anthranilate to yield N-(5'-phosphoribosyl)-anthranilate (PRA). The sequence is that of Anthranilate phosphoribosyltransferase from Bacteroides thetaiotaomicron (strain ATCC 29148 / DSM 2079 / JCM 5827 / CCUG 10774 / NCTC 10582 / VPI-5482 / E50).